We begin with the raw amino-acid sequence, 453 residues long: Ribosome biogenesis protein SSF2 (453 aa).

A compositionally biased stretch (basic residues) spans 1 to 11 (MAKRRQKKRTH). 3 disordered regions span residues 1–22 (MAKR…ERDI), 275–327 (KAKH…KAIK), and 373–453 (AKMR…SEVE). Residues 26–348 (MVIRVGQTSL…LVKIEDGICS (323 aa)) form the Brix domain. A compositionally biased stretch (basic and acidic residues) spans 373 to 398 (AKMRLKEQRRKEQEENIAKKKAVKDA). The segment covering 399-409 (KKQRKLERRKA) has biased composition (basic residues). The span at 440-453 (VPEDLDSDLFSEVE) shows a compositional bias: acidic residues.

Part of a complex that includes BRX1, RPF1, RPF2 and SSF1 or SSF2.

The protein localises to the nucleus. It is found in the nucleolus. Its function is as follows. Required for biogenesis of the 60S ribosomal subunit. This chain is Ribosome biogenesis protein SSF2 (SSF2), found in Saccharomyces cerevisiae (strain ATCC 204508 / S288c) (Baker's yeast).